A 106-amino-acid chain; its full sequence is EspC protein homolog (106 aa).

The protein belongs to the EspC family.

The polypeptide is EspC protein homolog (Mycobacterium leprae (strain TN)).